A 185-amino-acid polypeptide reads, in one-letter code: Ribosome-recycling factor (185 aa).

The protein belongs to the RRF family.

The protein localises to the cytoplasm. Its function is as follows. Responsible for the release of ribosomes from messenger RNA at the termination of protein biosynthesis. May increase the efficiency of translation by recycling ribosomes from one round of translation to another. This is Ribosome-recycling factor from Wolbachia sp. subsp. Drosophila simulans (strain wRi).